A 631-amino-acid chain; its full sequence is Phosphomethylpyrimidine synthase (631 aa).

Substrate-binding positions include N239, M268, Y297, H333, 353-355 (SRG), 394-397 (DGLR), and E433. Residue H437 participates in Zn(2+) binding. Y460 is a binding site for substrate. Residue H501 coordinates Zn(2+). C581, C584, and C589 together coordinate [4Fe-4S] cluster.

It belongs to the ThiC family. In terms of assembly, homodimer. [4Fe-4S] cluster is required as a cofactor.

It carries out the reaction 5-amino-1-(5-phospho-beta-D-ribosyl)imidazole + S-adenosyl-L-methionine = 4-amino-2-methyl-5-(phosphooxymethyl)pyrimidine + CO + 5'-deoxyadenosine + formate + L-methionine + 3 H(+). It functions in the pathway cofactor biosynthesis; thiamine diphosphate biosynthesis. Functionally, catalyzes the synthesis of the hydroxymethylpyrimidine phosphate (HMP-P) moiety of thiamine from aminoimidazole ribotide (AIR) in a radical S-adenosyl-L-methionine (SAM)-dependent reaction. The sequence is that of Phosphomethylpyrimidine synthase from Escherichia coli O45:K1 (strain S88 / ExPEC).